A 404-amino-acid chain; its full sequence is Cysteine desulfurase IscS (404 aa).

Residues 75-76 (AT), N155, Q183, and 203-205 (SAH) each bind pyridoxal 5'-phosphate. The residue at position 206 (K206) is an N6-(pyridoxal phosphate)lysine. A pyridoxal 5'-phosphate-binding site is contributed by T243. C328 serves as the catalytic Cysteine persulfide intermediate. C328 is a [2Fe-2S] cluster binding site.

Belongs to the class-V pyridoxal-phosphate-dependent aminotransferase family. NifS/IscS subfamily. As to quaternary structure, homodimer. Forms a heterotetramer with IscU, interacts with other sulfur acceptors. The cofactor is pyridoxal 5'-phosphate.

The protein localises to the cytoplasm. The catalysed reaction is (sulfur carrier)-H + L-cysteine = (sulfur carrier)-SH + L-alanine. The protein operates within cofactor biosynthesis; iron-sulfur cluster biosynthesis. Functionally, master enzyme that delivers sulfur to a number of partners involved in Fe-S cluster assembly, tRNA modification or cofactor biosynthesis. Catalyzes the removal of elemental sulfur atoms from cysteine to produce alanine. Functions as a sulfur delivery protein for Fe-S cluster synthesis onto IscU, an Fe-S scaffold assembly protein, as well as other S acceptor proteins. In Pseudomonas entomophila (strain L48), this protein is Cysteine desulfurase IscS.